The primary structure comprises 453 residues: UDP-N-acetylmuramoylalanine--D-glutamate ligase (453 aa).

119–125 (GTNGKTT) contributes to the ATP binding site.

It belongs to the MurCDEF family.

It localises to the cytoplasm. The catalysed reaction is UDP-N-acetyl-alpha-D-muramoyl-L-alanine + D-glutamate + ATP = UDP-N-acetyl-alpha-D-muramoyl-L-alanyl-D-glutamate + ADP + phosphate + H(+). It participates in cell wall biogenesis; peptidoglycan biosynthesis. Cell wall formation. Catalyzes the addition of glutamate to the nucleotide precursor UDP-N-acetylmuramoyl-L-alanine (UMA). In Syntrophus aciditrophicus (strain SB), this protein is UDP-N-acetylmuramoylalanine--D-glutamate ligase.